The sequence spans 290 residues: Elongation factor Ts, mitochondrial 1 (290 aa).

Belongs to the EF-Ts family.

It localises to the mitochondrion. Associates with the EF-Tu.GDP complex and induces the exchange of GDP to GTP. It remains bound to the aminoacyl-tRNA.EF-Tu.GTP complex up to the GTP hydrolysis stage on the ribosome. This is Elongation factor Ts, mitochondrial 1 from Postia placenta (strain ATCC 44394 / Madison 698-R) (Brown rot fungus).